The sequence spans 211 residues: Thiamine-phosphate synthase (211 aa).

Residues 37–41 and N69 contribute to the 4-amino-2-methyl-5-(diphosphooxymethyl)pyrimidine site; that span reads QLRIK. Mg(2+) is bound by residues D70 and D89. Residue S108 coordinates 4-amino-2-methyl-5-(diphosphooxymethyl)pyrimidine. Position 134–136 (134–136) interacts with 2-[(2R,5Z)-2-carboxy-4-methylthiazol-5(2H)-ylidene]ethyl phosphate; the sequence is TQT. Position 137 (K137) interacts with 4-amino-2-methyl-5-(diphosphooxymethyl)pyrimidine. 2-[(2R,5Z)-2-carboxy-4-methylthiazol-5(2H)-ylidene]ethyl phosphate-binding positions include G166 and 186 to 187; that span reads IS.

The protein belongs to the thiamine-phosphate synthase family. It depends on Mg(2+) as a cofactor.

It carries out the reaction 2-[(2R,5Z)-2-carboxy-4-methylthiazol-5(2H)-ylidene]ethyl phosphate + 4-amino-2-methyl-5-(diphosphooxymethyl)pyrimidine + 2 H(+) = thiamine phosphate + CO2 + diphosphate. It catalyses the reaction 2-(2-carboxy-4-methylthiazol-5-yl)ethyl phosphate + 4-amino-2-methyl-5-(diphosphooxymethyl)pyrimidine + 2 H(+) = thiamine phosphate + CO2 + diphosphate. The catalysed reaction is 4-methyl-5-(2-phosphooxyethyl)-thiazole + 4-amino-2-methyl-5-(diphosphooxymethyl)pyrimidine + H(+) = thiamine phosphate + diphosphate. The protein operates within cofactor biosynthesis; thiamine diphosphate biosynthesis; thiamine phosphate from 4-amino-2-methyl-5-diphosphomethylpyrimidine and 4-methyl-5-(2-phosphoethyl)-thiazole: step 1/1. Condenses 4-methyl-5-(beta-hydroxyethyl)thiazole monophosphate (THZ-P) and 2-methyl-4-amino-5-hydroxymethyl pyrimidine pyrophosphate (HMP-PP) to form thiamine monophosphate (TMP). The chain is Thiamine-phosphate synthase from Shigella boydii serotype 4 (strain Sb227).